Reading from the N-terminus, the 261-residue chain is Transcription factor BEE 3 (261 aa).

A compositionally biased stretch (low complexity) spans 72 to 82 (NIQNNEESSSQ). Disordered regions lie at residues 72-158 (NIQN…TDSH) and 242-261 (VEMG…SWTL). The segment covering 95-123 (VSTSENSVSDQTLSTSSAQVSINGNISTK) has biased composition (polar residues). Over residues 135 to 146 (NREEEKEREVVH) the composition is skewed to basic and acidic residues. The 51-residue stretch at 153-203 (QATDSHSIAERVRRGKINERLKCLQDIVPGCYKTMGMATMLDEIINYVQSL) folds into the bHLH domain.

In terms of assembly, homodimer. As to expression, expressed in stems.

The protein resides in the nucleus. Positive regulator of brassinosteroid signaling. The protein is Transcription factor BEE 3 (BEE3) of Arabidopsis thaliana (Mouse-ear cress).